Consider the following 233-residue polypeptide: Ribonuclease 3 (233 aa).

Residues 8-135 (AQRFLEDKQL…VIGAIYLDQG (128 aa)) form the RNase III domain. A Mg(2+)-binding site is contributed by glutamate 48. Aspartate 52 is a catalytic residue. Aspartate 121 and glutamate 124 together coordinate Mg(2+). Glutamate 124 is an active-site residue. A DRBM domain is found at 161 to 230 (DYKSKLQELV…AQKVLQDNLV (70 aa)).

It belongs to the ribonuclease III family. As to quaternary structure, homodimer. Mg(2+) is required as a cofactor.

The protein resides in the cytoplasm. It carries out the reaction Endonucleolytic cleavage to 5'-phosphomonoester.. Its function is as follows. Digests double-stranded RNA. Involved in the processing of primary rRNA transcript to yield the immediate precursors to the large and small rRNAs (23S and 16S). Processes some mRNAs, and tRNAs when they are encoded in the rRNA operon. Processes pre-crRNA and tracrRNA of type II CRISPR loci if present in the organism. The polypeptide is Ribonuclease 3 (Syntrophomonas wolfei subsp. wolfei (strain DSM 2245B / Goettingen)).